Reading from the N-terminus, the 239-residue chain is AA9 family lytic polysaccharide monooxygenase C (239 aa).

His-1 lines the Cu(2+) pocket. Residues Cys-39 and Cys-190 are joined by a disulfide bond. Residue Asn-75 is glycosylated (N-linked (GlcNAc...) asparagine). His-84 provides a ligand contact to Cu(2+). Asn-135 carries an N-linked (GlcNAc...) asparagine glycan. O2 is bound by residues His-157 and Gln-166. Tyr-168 contacts Cu(2+). N-linked (GlcNAc...) asparagine glycosylation is found at Asn-194 and Asn-229.

This sequence belongs to the polysaccharide monooxygenase AA9 family. The cofactor is Cu(2+).

The protein localises to the secreted. The catalysed reaction is [(1-&gt;4)-beta-D-glucosyl]n+m + reduced acceptor + O2 = 4-dehydro-beta-D-glucosyl-[(1-&gt;4)-beta-D-glucosyl]n-1 + [(1-&gt;4)-beta-D-glucosyl]m + acceptor + H2O.. Functionally, lytic polysaccharide monooxygenase (LPMO) that depolymerizes crystalline and amorphous polysaccharides via the oxidation of scissile alpha- or beta-(1-4)-glycosidic bonds, yielding C1 or C4 oxidation products. Catalysis by LPMOs requires the reduction of the active-site copper from Cu(II) to Cu(I) by a reducing agent and H(2)O(2) or O(2) as a cosubstrate. This is AA9 family lytic polysaccharide monooxygenase C from Gloeophyllum trabeum (Brown rot fungus).